The primary structure comprises 395 residues: Acetate kinase (395 aa).

Asn-8 provides a ligand contact to Mg(2+). Residue Lys-15 participates in ATP binding. Residue Arg-89 coordinates substrate. Catalysis depends on Asp-146, which acts as the Proton donor/acceptor. Residues 206 to 210 (HLGNG), 281 to 283 (DLR), and 329 to 333 (GIGEN) contribute to the ATP site. Glu-382 serves as a coordination point for Mg(2+).

This sequence belongs to the acetokinase family. In terms of assembly, homodimer. Mg(2+) serves as cofactor. Mn(2+) is required as a cofactor.

Its subcellular location is the cytoplasm. It catalyses the reaction acetate + ATP = acetyl phosphate + ADP. It participates in metabolic intermediate biosynthesis; acetyl-CoA biosynthesis; acetyl-CoA from acetate: step 1/2. Its activity is regulated as follows. Induced by glucose excess, the induction may be mediated by CcpA transcriptional regulator. Functionally, catalyzes the formation of acetyl phosphate from acetate and ATP. Can also catalyze the reverse reaction. Appears to favor the formation of acetate. Involved in the secretion of excess carbohydrate. The polypeptide is Acetate kinase (Bacillus subtilis (strain 168)).